A 370-amino-acid chain; its full sequence is MTNANVDATQLTTKPSQDGFYMPAEWAAQQAVWMIWPYRPDNWRSAGAYAQATFAKVADAIGGATPVYMGVPKAFLAEAKTVMPSHVTLVEMDSNDCWARDTGPTVVVNAEGECRGVDWGFNAWGGHNGGLYFPWDKDEQVAQQMLKQHGFARYSAPLILEGGSIHVDGEGTCMTSAECLLNANRNPDLTKEQIEDLLRDYLNVKQFIWLQDGVYMDETDGHIDNMCCFARPGEVILHWTDDETDPQYPRSKAALDVLQNTVDAQGRKLKIHLLPQPGPLYCTEEESLGVTEGTGVPRTAGERLAGSYVNFLITNNRIVFPLLDPTTDDIAAQKLQEIFPEYEIVGVPAREILLGGGNIHCITQQIPSGK.

Residue C361 is the Amidino-cysteine intermediate of the active site.

It belongs to the agmatine deiminase family.

The catalysed reaction is agmatine + H2O = N-carbamoylputrescine + NH4(+). The protein is Putative agmatine deiminase of Shewanella baltica (strain OS195).